The primary structure comprises 66 residues: DNA-directed RNA polymerase subunit omega (66 aa).

This sequence belongs to the RNA polymerase subunit omega family. The RNAP catalytic core consists of 2 alpha, 1 beta, 1 beta' and 1 omega subunit. When a sigma factor is associated with the core the holoenzyme is formed, which can initiate transcription.

It carries out the reaction RNA(n) + a ribonucleoside 5'-triphosphate = RNA(n+1) + diphosphate. Functionally, promotes RNA polymerase assembly. Latches the N- and C-terminal regions of the beta' subunit thereby facilitating its interaction with the beta and alpha subunits. In Geobacillus kaustophilus (strain HTA426), this protein is DNA-directed RNA polymerase subunit omega.